The sequence spans 493 residues: Ribosomal protein uS12 methylthiotransferase RimO (493 aa).

The MTTase N-terminal domain occupies 5–121 (RTVALVTLGC…ISDRLQTILN (117 aa)). Cysteine 14, cysteine 50, and cysteine 84 together coordinate [4Fe-4S] cluster. Residues 153 to 177 (LPGHGPTDLPEGVAPASGPRAPLRR) are disordered. Residues 179–410 (LDGSPVASVK…RLAEELVSQR (232 aa)) enclose the Radical SAM core domain. Positions 193, 197, and 200 each coordinate [4Fe-4S] cluster. Residues 412-482 (DERVGATVRV…GVDLVAEPLL (71 aa)) form the TRAM domain.

It belongs to the methylthiotransferase family. RimO subfamily. It depends on [4Fe-4S] cluster as a cofactor.

It localises to the cytoplasm. The catalysed reaction is L-aspartate(89)-[ribosomal protein uS12]-hydrogen + (sulfur carrier)-SH + AH2 + 2 S-adenosyl-L-methionine = 3-methylsulfanyl-L-aspartate(89)-[ribosomal protein uS12]-hydrogen + (sulfur carrier)-H + 5'-deoxyadenosine + L-methionine + A + S-adenosyl-L-homocysteine + 2 H(+). Functionally, catalyzes the methylthiolation of an aspartic acid residue of ribosomal protein uS12. This chain is Ribosomal protein uS12 methylthiotransferase RimO, found in Streptomyces coelicolor (strain ATCC BAA-471 / A3(2) / M145).